Consider the following 727-residue polypeptide: MTQEVLERSIQVGGRTMTFQTGKIGKQAGGAIFCRYGDTVVSAFATGSAQPREGIDFFPLTVEFEERLYAAGKIPGGFIKREGRPSEKAILSARLIDRPIRPLFPEGYRNDVQVVAQVMSVDQDCASDITGINAASAALTISNVPFEGPVAAVTVGLIGDEFIINPTVEQSEKSVMHLTVAGTKDAVMMVEAGAQEVPEAQMLEAIMFGHREIQRIAEFIENYRLEALERNLAKPKQEVVMKQMPEEIVQAVKAFAYDKMDQAVRTEEKKAREEAIRQVKEEALAHFAEQYPEDSKTIDKILEDFVHKIVRRLITVEHIRPDGRALDEIRPISVEVGILPRTHGTGLFTRGQTQVLTVATLGAVGDEQILDGLGLEESKRYMHHYNFPPYSVGETRPMRGPGRREIGHGALAERALLPVIPDENDFPYTIRLVSEVLESNGSSSMASVCGSTLSLMDAGVPVKSPVAGIAMGLISEENHIAILSDIQGMEDHDGDMDFKVAGTSQGVTALQMDIKIKGVSREILERALTQAKEGRLFILDKMLSVIEKPRPELSPFAPRIITASIHPDKIREVIGPGGKTIKKIIDETGVKIDIEDDGRVFISAVDGEAGENALKIIQALTQEVEVGRIYNGRVTRIMDFGAFVEVIPGVLGLSGKEGLVHISQLAHGRVEKVEDVVKLGDDILVKATGIDKQGRLNLSRKEALPNPNPSSNPNPNGITANRNPRNS.

Positions 491 and 497 each coordinate Mg(2+). One can recognise a KH domain in the interval 558–617; that stretch reads PRIITASIHPDKIREVIGPGGKTIKKIIDETGVKIDIEDDGRVFISAVDGEAGENALKII. Residues 627–701 enclose the S1 motif domain; that stretch reads GRIYNGRVTR…KQGRLNLSRK (75 aa). The segment at 698-727 is disordered; the sequence is LSRKEALPNPNPSSNPNPNGITANRNPRNS. Residues 717–727 show a composition bias toward polar residues; it reads GITANRNPRNS.

It belongs to the polyribonucleotide nucleotidyltransferase family. The cofactor is Mg(2+).

It localises to the cytoplasm. The catalysed reaction is RNA(n+1) + phosphate = RNA(n) + a ribonucleoside 5'-diphosphate. Involved in mRNA degradation. Catalyzes the phosphorolysis of single-stranded polyribonucleotides processively in the 3'- to 5'-direction. This chain is Polyribonucleotide nucleotidyltransferase, found in Desulfitobacterium hafniense (strain Y51).